The following is a 122-amino-acid chain: UPF0231 protein VF_2154 (122 aa).

Belongs to the UPF0231 family.

This Aliivibrio fischeri (strain ATCC 700601 / ES114) (Vibrio fischeri) protein is UPF0231 protein VF_2154.